The primary structure comprises 660 residues: Poly [ADP-ribose] polymerase 2-A (660 aa).

The SAP 1 domain maps to 2–36 (SARLRVEELRAELQRRGLDASGNKPVLVRRLDAAI). The disordered stretch occupies residues 40 to 92 (EEEEAAVSAAAKEEADAGGVVDGEGNGEDKRKRKRRGDGEDVDNSESDAAKLE). A Nuclear localization signal motif is present at residues 69–75 (KRKRKRR). Residues 91–125 (LEGMSYRELQALAKSRGLAANGSKKEVIERLLCAP) form the SAP 2 domain. In terms of domain architecture, WGR spans 179-281 (TYHVLQVWFL…KSFECYARKY (103 aa)). The 119-residue stretch at 308-426 (ETKLETRIAS…EIEIATKLLE (119 aa)) folds into the PARP alpha-helical domain. The PARP catalytic domain occupies 434 to 660 (DPLYARYKQL…LHVSFNFKKR (227 aa)).

It belongs to the ARTD/PARP family.

The protein localises to the nucleus. It catalyses the reaction NAD(+) + (ADP-D-ribosyl)n-acceptor = nicotinamide + (ADP-D-ribosyl)n+1-acceptor + H(+).. The enzyme catalyses L-aspartyl-[protein] + NAD(+) = 4-O-(ADP-D-ribosyl)-L-aspartyl-[protein] + nicotinamide. It carries out the reaction L-glutamyl-[protein] + NAD(+) = 5-O-(ADP-D-ribosyl)-L-glutamyl-[protein] + nicotinamide. In terms of biological role, involved in the base excision repair (BER) pathway, by catalyzing the poly(ADP-ribosyl)ation of a limited number of acceptor proteins involved in chromatin architecture and in DNA metabolism. This modification follows DNA damages and appears as an obligatory step in a detection/signaling pathway leading to the reparation of DNA strand breaks. The sequence is that of Poly [ADP-ribose] polymerase 2-A (PARP2-A) from Oryza sativa subsp. japonica (Rice).